The sequence spans 445 residues: Histidinol dehydrogenase (445 aa).

3 residues coordinate NAD(+): Tyr130, Gln192, and Asn215. The substrate site is built by Ser238, Gln260, and His263. Residues Gln260 and His263 each coordinate Zn(2+). Residues Glu328 and His329 each act as proton acceptor in the active site. Substrate-binding residues include His329, Asp362, Glu416, and His421. Residue Asp362 coordinates Zn(2+). A Zn(2+)-binding site is contributed by His421.

This sequence belongs to the histidinol dehydrogenase family. It depends on Zn(2+) as a cofactor.

It carries out the reaction L-histidinol + 2 NAD(+) + H2O = L-histidine + 2 NADH + 3 H(+). It functions in the pathway amino-acid biosynthesis; L-histidine biosynthesis; L-histidine from 5-phospho-alpha-D-ribose 1-diphosphate: step 9/9. Its function is as follows. Catalyzes the sequential NAD-dependent oxidations of L-histidinol to L-histidinaldehyde and then to L-histidine. The protein is Histidinol dehydrogenase of Gloeobacter violaceus (strain ATCC 29082 / PCC 7421).